A 494-amino-acid chain; its full sequence is Zinc finger and SCAN domain-containing protein 30 (494 aa).

An SCAN box domain is found at 48 to 130 (RQKFRQFSYS…TMLEELEKEL (83 aa)). Residue lysine 197 forms a Glycyl lysine isopeptide (Lys-Gly) (interchain with G-Cter in SUMO2) linkage. 7 consecutive C2H2-type zinc fingers follow at residues 301 to 323 (YECF…QRIH), 329 to 351 (YACK…QRIH), 357 to 379 (YECC…RRIH), 385 to 407 (YECG…KKIH), 413 to 435 (YECI…QRIH), 441 to 463 (YECN…QRIH), and 469 to 491 (YECS…QRTH).

The protein belongs to the krueppel C2H2-type zinc-finger protein family.

It localises to the nucleus. May be involved in transcriptional regulation. This chain is Zinc finger and SCAN domain-containing protein 30 (ZSCAN30), found in Homo sapiens (Human).